Here is a 364-residue protein sequence, read N- to C-terminus: Aminomethyltransferase (364 aa).

It belongs to the GcvT family. As to quaternary structure, the glycine cleavage system is composed of four proteins: P, T, L and H.

The catalysed reaction is N(6)-[(R)-S(8)-aminomethyldihydrolipoyl]-L-lysyl-[protein] + (6S)-5,6,7,8-tetrahydrofolate = N(6)-[(R)-dihydrolipoyl]-L-lysyl-[protein] + (6R)-5,10-methylene-5,6,7,8-tetrahydrofolate + NH4(+). In terms of biological role, the glycine cleavage system catalyzes the degradation of glycine. This is Aminomethyltransferase from Escherichia coli O81 (strain ED1a).